A 142-amino-acid chain; its full sequence is C-type lectin 13 (142 aa).

An N-terminal signal peptide occupies residues 1 to 23 (MGRLVFVSFGGWDVFLSLSGTGA). Intrachain disulfides connect C25/C36, C53/C138, and C115/C130. The 108-residue stretch at 32 to 139 (YEGHCYRVFQ…CSKTHNVVCK (108 aa)) folds into the C-type lectin domain.

It belongs to the snaclec family. In terms of assembly, heteromultimer; disulfide-linked. Expressed by the venom gland.

It localises to the secreted. In terms of biological role, interferes with one step of hemostasis (modulation of platelet aggregation, or coagulation cascade, for example). The chain is C-type lectin 13 from Crotalus adamanteus (Eastern diamondback rattlesnake).